Here is a 791-residue protein sequence, read N- to C-terminus: Protein CLASP-2 (791 aa).

Composition is skewed to low complexity over residues 259–271 (ASDA…SVNS), 323–334 (RTPNTRPMTTRT), and 372–381 (SQPGSRNGSP). 3 disordered regions span residues 259-283 (ASDA…SKLS), 315-391 (TRMT…TGTL), and 422-454 (AMNT…PQKS). Over residues 422-434 (AMNTAKESLGQPS) the composition is skewed to polar residues.

Belongs to the CLASP family. In terms of assembly, interacts with hcp-1 and hcp-2.

The protein localises to the cytoplasm. It localises to the cytoskeleton. Its subcellular location is the microtubule organizing center. The protein resides in the centrosome. It is found in the chromosome. The protein localises to the centromere. It localises to the kinetochore. Its subcellular location is the spindle. In terms of biological role, probable microtubule plus-end tracking protein that promotes the stabilization of dynamic microtubules. Required for the formation of mitotic and meiotic spindles. Specifically promotes the polymerization of kinetochore-bound microtubules. Also required for cytoplasmic streaming. The protein is Protein CLASP-2 (cls-2) of Caenorhabditis briggsae.